The chain runs to 191 residues: Corrinoid adenosyltransferase (191 aa).

Residues 10–18 (TRTGDNGTT), K28, 140–145 (RRAERS), and N166 each bind ATP.

This sequence belongs to the Cob(I)alamin adenosyltransferase family.

It is found in the cytoplasm. The catalysed reaction is 2 cob(II)yrinate a,c diamide + reduced [electron-transfer flavoprotein] + 2 ATP = 2 adenosylcob(III)yrinate a,c-diamide + 2 triphosphate + oxidized [electron-transfer flavoprotein] + 3 H(+). It carries out the reaction 2 cob(II)alamin + reduced [electron-transfer flavoprotein] + 2 ATP = 2 adenosylcob(III)alamin + 2 triphosphate + oxidized [electron-transfer flavoprotein] + 3 H(+). It functions in the pathway cofactor biosynthesis; adenosylcobalamin biosynthesis; adenosylcobalamin from cob(II)yrinate a,c-diamide: step 2/7. The sequence is that of Corrinoid adenosyltransferase from Mycobacterium leprae (strain TN).